The chain runs to 391 residues: Na(+)/H(+) antiporter NhaA 2 (391 aa).

11 helical membrane passes run 25–45, 56–76, 98–118, 128–148, 157–177, 180–200, 208–228, 264–284, 297–317, 335–355, and 364–384; these read AGGI…NSPL, VWLG…IFFL, ALPG…YIAI, GWAI…SLLG, VFLA…IAFF, SGLN…LVAL, LLPY…SGVH, VAFA…LSGI, VALG…VLAI, GVAI…NLAF, and EVKV…IVLL.

This sequence belongs to the NhaA Na(+)/H(+) (TC 2.A.33) antiporter family.

The protein resides in the cell inner membrane. The catalysed reaction is Na(+)(in) + 2 H(+)(out) = Na(+)(out) + 2 H(+)(in). Functionally, na(+)/H(+) antiporter that extrudes sodium in exchange for external protons. This Pseudomonas syringae pv. tomato (strain ATCC BAA-871 / DC3000) protein is Na(+)/H(+) antiporter NhaA 2.